The primary structure comprises 369 residues: GDSL esterase/lipase At5g42170 (369 aa).

The N-terminal stretch at 1–16 is a signal peptide; the sequence is MSRLVYVIFLLVVVEG. Residues asparagine 28 and asparagine 45 are each glycosylated (N-linked (GlcNAc...) asparagine). Residue serine 57 is the Nucleophile of the active site. Residues asparagine 203 and asparagine 336 are each glycosylated (N-linked (GlcNAc...) asparagine). Residues aspartate 344 and histidine 347 contribute to the active site.

The protein belongs to the 'GDSL' lipolytic enzyme family.

Its subcellular location is the secreted. The polypeptide is GDSL esterase/lipase At5g42170 (Arabidopsis thaliana (Mouse-ear cress)).